A 482-amino-acid polypeptide reads, in one-letter code: Chromosome stability protein 9 (482 aa).

Disordered regions lie at residues 239–263 and 418–482; these read SSLRNSSKNNNGTVTPSTSGRVNKN and SGLA…RRIR. Residues 240–249 are compositionally biased toward low complexity; sequence SLRNSSKNNN. Residues 250–263 are compositionally biased toward polar residues; it reads GTVTPSTSGRVNKN. Residues 418 to 437 are compositionally biased toward low complexity; it reads SGLAFSSSSNSLQQSKLPKS. 2 stretches are compositionally biased toward polar residues: residues 440–453 and 463–473; these read LKRSNSTQQLTNTH and RSSNTVLGSSK.

In terms of assembly, component of the synapsis initiation complex composed of at least ZIP2, ZIP3, MSH4 and MSH5. Also interacts with ZIP1, MRE11, RAD51 and RAD53.

It localises to the nucleus. The protein localises to the chromosome. Its function is as follows. Component of the synapsis initiation complex (SIC) necessary for the synaptonemal complex assembly. Stabilizes the ZIP2 component to the chromosomes. The SIC complex loads onto chromosomes and nucleates ZIP1 polymerization, a molecular zipper that acts to bring homologous chromosomes in close apposition, which is required for meiotic crossover. May also be involved in double strand break repair. The chain is Chromosome stability protein 9 (CST9) from Saccharomyces cerevisiae (strain ATCC 204508 / S288c) (Baker's yeast).